The following is a 398-amino-acid chain: Bombesin receptor subtype-3 (398 aa).

Residues 1–40 (MAQRQPHSPNQTLISITNDTESSSVVSNDNTNKGRSGDNS) lie on the Extracellular side of the membrane. N-linked (GlcNAc...) asparagine glycosylation is found at Asn10 and Asn18. Residues 41 to 62 (PGIEALCAIYITYAVIISVGIL) form a helical membrane-spanning segment. Over 63–81 (GNAILIKVFFKTKSMQTVP) the chain is Cytoplasmic. The helical transmembrane segment at 82–102 (NIFITSLAFGDLLLLLTCVPV) threads the bilayer. At 103–120 (DATHYLAEGWLFGRIGCK) the chain is on the extracellular side. A disulfide bridge links Cys119 with Cys202. Residues 121 to 142 (VLSFIRLTSVGVSVFTLTILSA) traverse the membrane as a helical segment. At 143–162 (DRYKAVVKPLERQPSNAILK) the chain is on the cytoplasmic side. Residues 163-183 (TCIKAGCVWIVSMIFALPEAI) traverse the membrane as a helical segment. Topologically, residues 184-219 (FSNVYSFRDPNKNVTFESCTSYPVSKKLLQEIHSLL) are extracellular. The helical transmembrane segment at 220-240 (CFLVFYIIPLSIISVYYSLIA) threads the bilayer. Over 241–271 (RTLYKSTLNIPTEEQGHARKQIESRKRIART) the chain is Cytoplasmic. Residues 272–292 (VLVLVALFALCWLPNHLLYLY) traverse the membrane as a helical segment. Residues 293-312 (HSFTSQTYVDPSAMHFIFTI) are Extracellular-facing. The chain crosses the membrane as a helical span at residues 313-332 (FSRVLAFSNSCVNPFALYWL). Over 333 to 398 (SKTFQKHFKA…CSVKQAEDRV (66 aa)) the chain is Cytoplasmic. The S-palmitoyl cysteine moiety is linked to residue Cys346.

This sequence belongs to the G-protein coupled receptor 1 family. As to quaternary structure, interacts with C6orf89.

The protein localises to the cell membrane. Its function is as follows. Role in sperm cell division, maturation, or function. This receptor mediates its action by association with G proteins that activate a phosphatidylinositol-calcium second messenger system. This Macaca mulatta (Rhesus macaque) protein is Bombesin receptor subtype-3 (BRS3).